The chain runs to 325 residues: MAQQVQLSATVAESQLGQRLDQALAELFPDYSRSRIKEWILDSRVTVNGKKINKPKEKVLGGELVAIDAQIEEDARWAPQEIPLDIVYEDNDILVINKPRGLVVHPGAGNPDGTVLNALLHYYPEIMDVPRAGIVHRLDKDTTGLMVVAKTVPAQTRLVEALQAREITREYEAVAIGNMTAGGRVDEPISRHSTKRTHMAVHPMGKPATTHYRIMEHFRAHTRLRLRLETGRTHQIRVHMSHINHPLVGDQLYGGRPRPPKGASDSFIAILRGFDRQALHATMLRLYHPIRGIQMEWHAALPEDMVELINALKADTEEFKDQMDW.

Residues Gln-18–Asn-91 enclose the S4 RNA-binding domain. The active site involves Asp-139.

The protein belongs to the pseudouridine synthase RluA family.

It localises to the cytoplasm. The catalysed reaction is uridine(1911/1915/1917) in 23S rRNA = pseudouridine(1911/1915/1917) in 23S rRNA. Its function is as follows. Responsible for synthesis of pseudouridine from uracil at positions 1911, 1915 and 1917 in 23S ribosomal RNA. This Yersinia pestis protein is Ribosomal large subunit pseudouridine synthase D (rluD).